Reading from the N-terminus, the 126-residue chain is Nucleoside diphosphate kinase B (126 aa).

Positions 6, 37, 68, 79, and 89 each coordinate ATP. Residue histidine 92 is the Pros-phosphohistidine intermediate of the active site.

Belongs to the NDK family. Requires Mg(2+) as cofactor.

Its subcellular location is the cytoplasm. The protein resides in the nucleus. It is found in the cell projection. The protein localises to the lamellipodium. It localises to the ruffle. The enzyme catalyses a 2'-deoxyribonucleoside 5'-diphosphate + ATP = a 2'-deoxyribonucleoside 5'-triphosphate + ADP. It catalyses the reaction a ribonucleoside 5'-diphosphate + ATP = a ribonucleoside 5'-triphosphate + ADP. In terms of biological role, major role in the synthesis of nucleoside triphosphates other than ATP. This is Nucleoside diphosphate kinase B (nme2) from Macruronus magellanicus (Patagonian grenadier).